The sequence spans 118 residues: uncharacterized protein (118 aa).

This is an uncharacterized protein from Kitasatospora aureofaciens (Streptomyces aureofaciens).